The primary structure comprises 263 residues: Acetylglutamate kinase (263 aa).

Substrate is bound by residues 49–50 (GG), R71, and N163.

It belongs to the acetylglutamate kinase family. ArgB subfamily.

Its subcellular location is the cytoplasm. It catalyses the reaction N-acetyl-L-glutamate + ATP = N-acetyl-L-glutamyl 5-phosphate + ADP. Its pathway is amino-acid biosynthesis; L-arginine biosynthesis; N(2)-acetyl-L-ornithine from L-glutamate: step 2/4. Its function is as follows. Catalyzes the ATP-dependent phosphorylation of N-acetyl-L-glutamate. This Moritella abyssi protein is Acetylglutamate kinase.